A 635-amino-acid chain; its full sequence is Threonine--tRNA ligase (635 aa).

A TGS domain is found at 1-61 (MTVVRLPDGT…EIDSDLVLIT (61 aa)). A catalytic region spans residues 242–533 (DHRKLGKQLD…LIEHHAGALP (292 aa)). Zn(2+)-binding residues include C333, H384, and H510.

This sequence belongs to the class-II aminoacyl-tRNA synthetase family. Homodimer. Zn(2+) is required as a cofactor.

The protein resides in the cytoplasm. The enzyme catalyses tRNA(Thr) + L-threonine + ATP = L-threonyl-tRNA(Thr) + AMP + diphosphate + H(+). Catalyzes the attachment of threonine to tRNA(Thr) in a two-step reaction: L-threonine is first activated by ATP to form Thr-AMP and then transferred to the acceptor end of tRNA(Thr). Also edits incorrectly charged L-seryl-tRNA(Thr). In Nitrosomonas eutropha (strain DSM 101675 / C91 / Nm57), this protein is Threonine--tRNA ligase.